A 431-amino-acid polypeptide reads, in one-letter code: Adenylosuccinate synthetase (431 aa).

GTP contacts are provided by residues 13–19 (GDEGKGK) and 41–43 (GHT). D14 functions as the Proton acceptor in the catalytic mechanism. 2 residues coordinate Mg(2+): D14 and G41. IMP is bound by residues 14–17 (DEGK), 39–42 (NAGH), T130, R144, Q225, T240, and R304. H42 functions as the Proton donor in the catalytic mechanism. A substrate-binding site is contributed by 300–306 (SVTGRPR). Residues R306, 332–334 (KLD), and 414–416 (STG) each bind GTP.

It belongs to the adenylosuccinate synthetase family. Homodimer. Mg(2+) is required as a cofactor.

The protein localises to the cytoplasm. It carries out the reaction IMP + L-aspartate + GTP = N(6)-(1,2-dicarboxyethyl)-AMP + GDP + phosphate + 2 H(+). It functions in the pathway purine metabolism; AMP biosynthesis via de novo pathway; AMP from IMP: step 1/2. In terms of biological role, plays an important role in the de novo pathway of purine nucleotide biosynthesis. Catalyzes the first committed step in the biosynthesis of AMP from IMP. The protein is Adenylosuccinate synthetase of Bordetella avium (strain 197N).